A 174-amino-acid chain; its full sequence is Chorion class CB protein M5H4 (174 aa).

Positions 1–20 are cleaved as a signal peptide; sequence MTTIVVLICASALFVQLAFS. The interval 21–71 is left arm; that stretch reads QCLGRDPVIGFGGAYGSGWGGYDAISPYDGLGYGVPYSAGFIGLSPSNLAA. The tract at residues 72-142 is central domain; it reads SCGGALAVNS…GDGAIGIVSE (71 aa). The tract at residues 143 to 174 is right arm; the sequence is APIVAPASIGYGQWPVNAGYKGIGPCGCGGLY.

Belongs to the chorion protein family.

Functionally, this protein is one of many from the eggshell of the silk moth. This is Chorion class CB protein M5H4 from Bombyx mori (Silk moth).